Here is a 334-residue protein sequence, read N- to C-terminus: Kihadalactone A synthase LFS (334 aa).

Residues lysine 181–proline 286 enclose the Fe2OG dioxygenase domain. Fe cation contacts are provided by histidine 208, aspartate 210, and histidine 269. Position 277 (arginine 277) interacts with 2-oxoglutarate.

Belongs to the iron/ascorbate-dependent oxidoreductase family. Requires Fe(2+) as cofactor. In terms of tissue distribution, expressed in maturing fruits and in juice vesicles.

It catalyses the reaction (1R,2R,3S,8R,10R,11R,15S,16S)-3-(acetyloxy)-15-(1-hydroxy-4-oxobutan-2-yl)-2,7,7,11,16-pentamethyl-5-oxo-6-oxatetracyclo[9.7.0.0(2,8).0(12,16)]octadec-12-en-10-yl acetate + 2-oxoglutarate + O2 = kihadalactone A + succinate + CO2 + 2 H2O. Its pathway is secondary metabolite biosynthesis; terpenoid biosynthesis. In terms of biological role, 2-oxoglutarate-Fe(II) type oxidoreductase involved in the biosynthesis of limonoids triterpene natural products such as limonin, a compound with insecticidal activity responsible for the bitter taste in citrus. Catalyzes the formation of kihadalactone A. The chain is Kihadalactone A synthase LFS from Citrus sinensis (Sweet orange).